A 738-amino-acid polypeptide reads, in one-letter code: NAD(P)H-quinone oxidoreductase subunit 5, chloroplastic (738 aa).

Transmembrane regions (helical) follow at residues 9 to 29 (WIIP…LLLF), 40 to 60 (WAFP…NLSI), 89 to 109 (IDPL…MVLI), 125 to 145 (FASM…SNLI), 147 to 167 (IYIF…FWFT), 185 to 205 (GDFG…SFEF), 230 to 250 (AALL…HVWL), 258 to 278 (TPIS…FLVA), 280 to 300 (LLPL…IGII), 327 to 347 (LGYM…FHLI), 354 to 374 (ALLF…VGYS), 396 to 416 (ISFL…CFWS), 425 to 445 (WLYS…TAFY), 546 to 566 (LFPL…GIPF), 603 to 623 (FSVS…KPIY), and 718 to 738 (YLFF…FPVF).

The protein belongs to the complex I subunit 5 family. In terms of assembly, NDH is composed of at least 16 different subunits, 5 of which are encoded in the nucleus.

Its subcellular location is the plastid. It localises to the chloroplast thylakoid membrane. The catalysed reaction is a plastoquinone + NADH + (n+1) H(+)(in) = a plastoquinol + NAD(+) + n H(+)(out). It carries out the reaction a plastoquinone + NADPH + (n+1) H(+)(in) = a plastoquinol + NADP(+) + n H(+)(out). NDH shuttles electrons from NAD(P)H:plastoquinone, via FMN and iron-sulfur (Fe-S) centers, to quinones in the photosynthetic chain and possibly in a chloroplast respiratory chain. The immediate electron acceptor for the enzyme in this species is believed to be plastoquinone. Couples the redox reaction to proton translocation, and thus conserves the redox energy in a proton gradient. The chain is NAD(P)H-quinone oxidoreductase subunit 5, chloroplastic (ndhF) from Ligustrum vulgare (Common privet).